Here is a 269-residue protein sequence, read N- to C-terminus: Staphylococcal secretory antigen ssaA2 (269 aa).

The N-terminal stretch at 1–27 is a signal peptide; that stretch reads MKKIATATIATAGFATIAIASGNQAHA. Repeat copies occupy residues 83 to 85, 88 to 90, 91 to 93, 97 to 99, 103 to 105, 106 to 108, and 115 to 117. A 7 X 3 AA repeats of Y-[NS]-N region spans residues 83 to 115; it reads YNNYNYNNYNNGYSYNNYSRYNNYSNNNQSYNY. Positions 148 to 269 constitute a Peptidase C51 domain; that stretch reads MAPSSNGRSI…SQAAGYNFIH (122 aa).

The protein resides in the secreted. In terms of biological role, not known; immunogenic protein. This Staphylococcus aureus (strain MSSA476) protein is Staphylococcal secretory antigen ssaA2 (ssaA2).